The chain runs to 979 residues: Glucose transport transcription regulator RGT1 (979 aa).

Basic and acidic residues-rich tracts occupy residues 1–14 (MSAS…KEAE), 36–47 (DQCREKKTRCDF), and 105–114 (FKGDAGRPRA). Disordered regions lie at residues 1–47 (MSAS…RCDF), 65–142 (TFER…LAPG), 165–219 (IDSL…EDCR), 249–380 (LPQQ…SIES), 563–590 (DTEA…GKSA), and 926–954 (APES…NTSL). The segment at residues 35 to 64 (CDQCREKKTRCDFSDERPICSACQRMGKTC) is a DNA-binding region (zn(2)-C6 fungal-type). Residues 132-142 (QPRLQPLLAPG) are compositionally biased toward low complexity. 2 stretches are compositionally biased toward polar residues: residues 170-179 (SDVSNRNGSE) and 186-207 (SNAS…SQLP). Low complexity predominate over residues 251–263 (QQQQQQQQQNAQQ). Positions 280–295 (EHFKEFDEGFHSRKGS) are enriched in basic and acidic residues. Residues 296–309 (DVSVAVSPSSPVQV) are compositionally biased toward low complexity. The segment covering 310–329 (TRTQQAGLNSESRDTNTATA) has biased composition (polar residues). Over residues 358-368 (GPRKQKRKNSN) the composition is skewed to basic residues. Residues 369 to 380 (RNKPGSQSSIES) are compositionally biased toward low complexity. Acidic residues predominate over residues 565 to 574 (EASENEDEAG). The segment covering 942–953 (PGPNSDGSNNTS) has biased composition (low complexity).

The protein belongs to the EDS1/RGT1 family.

The protein resides in the nucleus. It is found in the cytoplasm. In terms of biological role, glucose-responsive transcription factor that regulates expression of several glucose transporter (HXT) genes in response to glucose. In the absence of glucose, it functions as a transcriptional repressor, whereas high concentrations of glucose cause it to function as a transcriptional activator. In cells growing on low levels of glucose, has a neutral role, neither repressing nor activating transcription. The polypeptide is Glucose transport transcription regulator RGT1 (RGT1) (Lachancea thermotolerans (strain ATCC 56472 / CBS 6340 / NRRL Y-8284) (Yeast)).